The sequence spans 154 residues: SKP1-like protein 13 (154 aa).

Residues 96–154 (MLAANYLNIKDLLDLGCQTVADMITGKKPDEIRALLGIENDFTPEEEEEIRKENQWAFE) are interaction with the F-box domain of F-box proteins.

This sequence belongs to the SKP1 family. As to quaternary structure, part of a SCF (SKP1-cullin-F-box) protein ligase complex. Interacts with ADO3/FKF1, EBF1, PP2A13, SKIP15, SKIP16, CPR1/CPR30, At1g55000, At3g61590, At1g67340, At1g78100, At3g04660, At4g38940, At4g39550 and At5g49610. Mostly expressed in inflorescences, and, to a lower extent, in seedlings and siliques. Also detected in cotyledons, leaves, pollen and seeds.

Its subcellular location is the nucleus. The protein operates within protein modification; protein ubiquitination. Functionally, involved in ubiquitination and subsequent proteasomal degradation of target proteins. Together with CUL1, RBX1 and a F-box protein, it forms a SCF E3 ubiquitin ligase complex. The functional specificity of this complex depends on the type of F-box protein. In the SCF complex, it serves as an adapter that links the F-box protein to CUL1. In Arabidopsis thaliana (Mouse-ear cress), this protein is SKP1-like protein 13 (ASK13).